We begin with the raw amino-acid sequence, 378 residues long: F-box/kelch-repeat protein At4g29370 (378 aa).

An F-box domain is found at 23-69 (TSLFLQLPDEILVNCLARLSKSSYRSLSLVCKTFRSLLHSQPLYSAR). 4 Kelch repeats span residues 124 to 172 (GSKI…VLDD), 173 to 218 (KIYV…VRKI), 220 to 259 (VVGG…WSNS), and 260 to 305 (WCVI…NDNR).

The polypeptide is F-box/kelch-repeat protein At4g29370 (Arabidopsis thaliana (Mouse-ear cress)).